A 185-amino-acid chain; its full sequence is Large ribosomal subunit protein bL25 (185 aa).

It belongs to the bacterial ribosomal protein bL25 family. CTC subfamily. As to quaternary structure, part of the 50S ribosomal subunit; part of the 5S rRNA/L5/L18/L25 subcomplex. Contacts the 5S rRNA. Binds to the 5S rRNA independently of L5 and L18.

This is one of the proteins that binds to the 5S RNA in the ribosome where it forms part of the central protuberance. The protein is Large ribosomal subunit protein bL25 of Microcystis aeruginosa (strain NIES-843 / IAM M-2473).